Consider the following 255-residue polypeptide: Probable cyclic nucleotide phosphodiesterase syc0937_d (255 aa).

Fe cation-binding residues include aspartate 19, histidine 21, aspartate 59, asparagine 89, histidine 157, histidine 196, and histidine 198. AMP contacts are provided by residues histidine 21, aspartate 59, and 89–90; that span reads NH. Histidine 198 lines the AMP pocket.

This sequence belongs to the cyclic nucleotide phosphodiesterase class-III family. Requires Fe(2+) as cofactor.

In Synechococcus sp. (strain ATCC 27144 / PCC 6301 / SAUG 1402/1) (Anacystis nidulans), this protein is Probable cyclic nucleotide phosphodiesterase syc0937_d.